The primary structure comprises 87 residues: RNA-binding protein Hfq (87 aa).

Residues 9-68 (DPFLNALRRERIPVSIYLVNGIKLQGQIESFDQFVILLKNTVSQMVYKHAISTVVPARAV) form the Sm domain.

Belongs to the Hfq family. In terms of assembly, homohexamer.

Functionally, RNA chaperone that binds small regulatory RNA (sRNAs) and mRNAs to facilitate mRNA translational regulation in response to envelope stress, environmental stress and changes in metabolite concentrations. Also binds with high specificity to tRNAs. The protein is RNA-binding protein Hfq of Aeromonas hydrophila subsp. hydrophila (strain ATCC 7966 / DSM 30187 / BCRC 13018 / CCUG 14551 / JCM 1027 / KCTC 2358 / NCIMB 9240 / NCTC 8049).